We begin with the raw amino-acid sequence, 266 residues long: uncharacterized protein (266 aa).

One can recognise a TIR domain in the interval leucine 112 to phenylalanine 261. Glutamate 192 is a catalytic residue.

It catalyses the reaction NAD(+) + H2O = ADP-D-ribose + nicotinamide + H(+). This is an uncharacterized protein from Bacillus subtilis (strain 168).